A 459-amino-acid chain; its full sequence is FBD-associated F-box protein At1g61320 (459 aa).

Residues 1–25 (MAPPTKRTRVEMAESSNKRMKPSET) are disordered. The 49-residue stretch at 21–69 (KPSETVPEDVLELMMSTYLPVQSLLTTRVLSKRFRETEVRSLDLDFSGI) folds into the F-box domain. Residues 396–428 (VKIIGYKGHWHELDIVEFFVKNAPSLKRLELQM) form the FBD domain.

The polypeptide is FBD-associated F-box protein At1g61320 (Arabidopsis thaliana (Mouse-ear cress)).